The primary structure comprises 240 residues: Agamous-like MADS-box protein AGL16 (240 aa).

Positions methionine 1 to serine 61 constitute an MADS-box domain. A K-box domain is found at isoleucine 86–glutamine 176.

Homodimer. Interacts with AGL15, AGL24, AP1, AGL6, AG, AGL1, AGL11, AGL5, SEP3, SEP1, AGL63, AGL14, SOC1 and AGL21. Interacts with AGL63. Interacts with SVP. Expressed at high levels in leaves, moderate levels in roots, seedlings and stems, and at low levels in flowers, pollen and siliques. Accumulates in leaf guard cells and trichomes. Also present in epidermal cells of roots. Expressed in mature guard cells.

Its subcellular location is the nucleus. Its function is as follows. Probable transcription factor involved in the regulation of flowering time in long-day photoperiod. Participates in the repression of FT expression and floral transition, by interacting closely with the FLC-SVP pathways. Functions in the satellite meristemoid lineage of stomatal development. In Arabidopsis thaliana (Mouse-ear cress), this protein is Agamous-like MADS-box protein AGL16 (AGL16).